The chain runs to 152 residues: Xanthine-guanine phosphoribosyltransferase (152 aa).

5-phospho-alpha-D-ribose 1-diphosphate-binding positions include 37–38, arginine 69, and 88–96; these read RG and DDLVDTGGT. Arginine 69 contributes to the GMP binding site. Aspartate 89 lines the Mg(2+) pocket. Aspartate 92 and isoleucine 135 together coordinate guanine. Residues aspartate 92 and isoleucine 135 each contribute to the xanthine site. GMP-binding positions include 92 to 96 and 134 to 135; these read DTGGT and WI.

Belongs to the purine/pyrimidine phosphoribosyltransferase family. XGPT subfamily. Homotetramer. Mg(2+) is required as a cofactor.

It is found in the cell inner membrane. The catalysed reaction is GMP + diphosphate = guanine + 5-phospho-alpha-D-ribose 1-diphosphate. The enzyme catalyses XMP + diphosphate = xanthine + 5-phospho-alpha-D-ribose 1-diphosphate. It carries out the reaction IMP + diphosphate = hypoxanthine + 5-phospho-alpha-D-ribose 1-diphosphate. The protein operates within purine metabolism; GMP biosynthesis via salvage pathway; GMP from guanine: step 1/1. It participates in purine metabolism; XMP biosynthesis via salvage pathway; XMP from xanthine: step 1/1. In terms of biological role, purine salvage pathway enzyme that catalyzes the transfer of the ribosyl-5-phosphate group from 5-phospho-alpha-D-ribose 1-diphosphate (PRPP) to the N9 position of the 6-oxopurines guanine and xanthine to form the corresponding ribonucleotides GMP (guanosine 5'-monophosphate) and XMP (xanthosine 5'-monophosphate), with the release of PPi. To a lesser extent, also acts on hypoxanthine. This chain is Xanthine-guanine phosphoribosyltransferase, found in Edwardsiella ictaluri (strain 93-146).